The following is a 409-amino-acid chain: NADH-ubiquinone oxidoreductase chain 4 (409 aa).

Helical transmembrane passes span 10 to 30, 44 to 64, 76 to 96, 98 to 118, 120 to 140, 160 to 180, 194 to 214, 221 to 241, 245 to 265, 271 to 291, 305 to 325, 353 to 373, and 389 to 409; these read LWLF…FLIF, SYSF…IVIS, ILVF…LYMF, ELSM…IEKI, SSYY…FVYF, FFIL…HLWL, LLAG…LGSL, VWIL…VFQS, ALAA…LVFI, ISSV…FYLI, FMSS…VVFL, MFVM…FLIT, and VGFS…SVFY.

It belongs to the complex I subunit 4 family.

The protein resides in the mitochondrion membrane. It catalyses the reaction a ubiquinone + NADH + 5 H(+)(in) = a ubiquinol + NAD(+) + 4 H(+)(out). Functionally, core subunit of the mitochondrial membrane respiratory chain NADH dehydrogenase (Complex I) that is believed to belong to the minimal assembly required for catalysis. Complex I functions in the transfer of electrons from NADH to the respiratory chain. The immediate electron acceptor for the enzyme is believed to be ubiquinone. The polypeptide is NADH-ubiquinone oxidoreductase chain 4 (Caenorhabditis elegans).